Consider the following 281-residue polypeptide: Pre T-cell antigen receptor alpha (281 aa).

An N-terminal signal peptide occupies residues 1–23; sequence MAGTWLLLLLALGCPALPTGVGG. Topologically, residues 24-146 are extracellular; that stretch reads TPFPSLAPPI…QEPLRGTPGG (123 aa). A disulfide bond links C47 and C107. N67 carries an N-linked (GlcNAc...) asparagine glycan. The helical transmembrane segment at 147–167 threads the bilayer; the sequence is ALWLGVLRLLLFKLLLFDLLL. The Cytoplasmic segment spans residues 168–281; sequence TCSCLCDPAG…LPPPLQAGAA (114 aa). The interval 196–233 is disordered; that stretch reads LHPATETGGREATSSPRPQPRDRRWGDTPPGRKPGSPV.

As to quaternary structure, heterodimer with TCRB; disulfide linked. This heterodimer assembles with CD3 proteins into a signaling-competent pre-T-cell receptor complex. Interacts with RHBDD1. In terms of tissue distribution, expressed in immature but not mature T-cells. Also found in CD34+ cells from peripheral blood, CD34+ precursors from umbilical cord blood and adult bone marrow.

It is found in the membrane. The protein resides in the cell membrane. Its function is as follows. Component of the pre-T-cell receptor complex (composed of PTCRA, TCRB and the CD3 complex) that has a crucial role in early T-cell development, particularly alpha-beta T cell differentiation. The sequence is that of Pre T-cell antigen receptor alpha from Homo sapiens (Human).